The following is a 447-amino-acid chain: Chitobiosyldiphosphodolichol beta-mannosyltransferase (447 aa).

At 1-8 (MSVFGFDN) the chain is on the lumenal side. Residues 9-29 (IPTWLWWLLAIYLATPFVLYV) traverse the membrane as a helical segment. At 30–127 (VQPYLFYEGK…LCSMFWKLRA (98 aa)) the chain is on the cytoplasmic side. Residues 128 to 148 (VDYILLQNPPTIPILPIAVVV) constitute an intramembrane region (helical). Topologically, residues 149-447 (KTFSRAKLII…ALSELKIIHK (299 aa)) are lumenal.

This sequence belongs to the glycosyltransferase group 1 family.

The protein resides in the endoplasmic reticulum membrane. It catalyses the reaction an N,N'-diacetylchitobiosyl-diphospho-di-trans,poly-cis-dolichol + GDP-alpha-D-mannose = a beta-D-Man-(1-&gt;4)-beta-D-GlcNAc-(1-&gt;4)-alpha-D-GlcNAc-diphospho-di-trans,poly-cis-dolichol + GDP + H(+). It functions in the pathway protein modification; protein glycosylation. Its function is as follows. Participates in the formation of the lipid-linked precursor oligosaccharide for N-glycosylation. Involved in assembling the dolichol-pyrophosphate-GlcNAc(2)-Man(5) intermediate on the cytoplasmic surface of the ER. The chain is Chitobiosyldiphosphodolichol beta-mannosyltransferase (ALG1) from Kluyveromyces lactis (strain ATCC 8585 / CBS 2359 / DSM 70799 / NBRC 1267 / NRRL Y-1140 / WM37) (Yeast).